The primary structure comprises 819 residues: Probable beta-glucosidase G (819 aa).

The N-terminal stretch at 1–20 (MTSASQILVWGLLAASGAQA) is a signal peptide. 5 N-linked (GlcNAc...) asparagine glycosylation sites follow: asparagine 41, asparagine 59, asparagine 107, asparagine 228, and asparagine 277. The active site involves aspartate 305. Asparagine 337, asparagine 344, asparagine 351, asparagine 403, asparagine 500, asparagine 509, asparagine 554, asparagine 567, asparagine 588, asparagine 627, asparagine 683, and asparagine 719 each carry an N-linked (GlcNAc...) asparagine glycan.

It belongs to the glycosyl hydrolase 3 family.

The protein localises to the secreted. The catalysed reaction is Hydrolysis of terminal, non-reducing beta-D-glucosyl residues with release of beta-D-glucose.. Its pathway is glycan metabolism; cellulose degradation. Beta-glucosidases are one of a number of cellulolytic enzymes involved in the degradation of cellulosic biomass. Catalyzes the last step releasing glucose from the inhibitory cellobiose. The sequence is that of Probable beta-glucosidase G (bglG) from Emericella nidulans (strain FGSC A4 / ATCC 38163 / CBS 112.46 / NRRL 194 / M139) (Aspergillus nidulans).